Consider the following 577-residue polypeptide: Arginine--tRNA ligase (577 aa).

The 'HIGH' region signature appears at P122–H132.

The protein belongs to the class-I aminoacyl-tRNA synthetase family. In terms of assembly, monomer.

The protein localises to the cytoplasm. The enzyme catalyses tRNA(Arg) + L-arginine + ATP = L-arginyl-tRNA(Arg) + AMP + diphosphate. The polypeptide is Arginine--tRNA ligase (Salmonella enteritidis PT4 (strain P125109)).